The sequence spans 350 residues: DNA-directed RNA polymerase subunit alpha (350 aa).

Residues 1–226 (MLISQRPTLS…ELFGLARELN (226 aa)) form an alpha N-terminal domain (alpha-NTD) region. Positions 241-350 (ADQAAHFALP…NQDYAETEQL (110 aa)) are alpha C-terminal domain (alpha-CTD). The interval 328-350 (GTWNSDAGYDLEDNQDYAETEQL) is disordered. A compositionally biased stretch (acidic residues) spans 336 to 350 (YDLEDNQDYAETEQL).

Belongs to the RNA polymerase alpha chain family. Homodimer. The RNAP catalytic core consists of 2 alpha, 1 beta, 1 beta' and 1 omega subunit. When a sigma factor is associated with the core the holoenzyme is formed, which can initiate transcription.

It carries out the reaction RNA(n) + a ribonucleoside 5'-triphosphate = RNA(n+1) + diphosphate. Functionally, DNA-dependent RNA polymerase catalyzes the transcription of DNA into RNA using the four ribonucleoside triphosphates as substrates. In Mycolicibacterium vanbaalenii (strain DSM 7251 / JCM 13017 / BCRC 16820 / KCTC 9966 / NRRL B-24157 / PYR-1) (Mycobacterium vanbaalenii), this protein is DNA-directed RNA polymerase subunit alpha.